The sequence spans 929 residues: Isoleucine--tRNA ligase (929 aa).

The 'HIGH' region motif lies at 58 to 68; sequence PYANGDIHIGH. Glu563 contacts L-isoleucyl-5'-AMP. The 'KMSKS' region signature appears at 605 to 609; sequence KMSKS. Residue Lys608 participates in ATP binding. Zn(2+) is bound by residues Cys892, Cys895, Cys912, and Cys915.

It belongs to the class-I aminoacyl-tRNA synthetase family. IleS type 1 subfamily. Monomer. Zn(2+) is required as a cofactor.

The protein resides in the cytoplasm. It carries out the reaction tRNA(Ile) + L-isoleucine + ATP = L-isoleucyl-tRNA(Ile) + AMP + diphosphate. Catalyzes the attachment of isoleucine to tRNA(Ile). As IleRS can inadvertently accommodate and process structurally similar amino acids such as valine, to avoid such errors it has two additional distinct tRNA(Ile)-dependent editing activities. One activity is designated as 'pretransfer' editing and involves the hydrolysis of activated Val-AMP. The other activity is designated 'posttransfer' editing and involves deacylation of mischarged Val-tRNA(Ile). The sequence is that of Isoleucine--tRNA ligase from Neisseria meningitidis serogroup A / serotype 4A (strain DSM 15465 / Z2491).